The chain runs to 491 residues: Spermatogenesis-defective protein 39 homolog (491 aa).

Position 21 is a phosphothreonine (T21). Positions 72–81 (KETAGSSGST) are enriched in polar residues. A disordered region spans residues 72–101 (KETAGSSGSTPEGREQLKGRNSFYTQLPKP). Residue T115 is modified to Phosphothreonine. S119, S122, and S128 each carry phosphoserine. Residues 121–141 (QSLSDALSDTPAKSYAPELGR) are disordered. The residue at position 130 (T130) is a Phosphothreonine.

Belongs to the SPE39 family. In terms of assembly, interacts with VPS33B. Associates with the homotypic fusion and vacuole protein sorting (HOPS) complex; impaired by VPS33B. Interacts with RAB11A.

Its subcellular location is the cytoplasm. It is found in the cytoplasmic vesicle. It localises to the early endosome. The protein localises to the recycling endosome. The protein resides in the late endosome. Functionally, proposed to be involved in endosomal maturation implicating in part VPS33B. In epithelial cells, the VPS33B:VIPAS39 complex may play a role in the apical RAB11A-dependent recycling pathway and in the maintenance of the apical-basolateral polarity. May play a role in lysosomal trafficking, probably via association with the core HOPS complex in a discrete population of endosomes; the functions seems to be independent of VPS33B. May play a role in vesicular trafficking during spermatogenesis. May be involved in direct or indirect transcriptional regulation of E-cadherin. In Mus musculus (Mouse), this protein is Spermatogenesis-defective protein 39 homolog (Vipas39).